A 240-amino-acid polypeptide reads, in one-letter code: Orotidine 5'-phosphate decarboxylase (240 aa).

Substrate-binding positions include D12, K34, 62–71, T117, R180, Q189, G209, and R210; that span reads DMKLFDIGNT. The Proton donor role is filled by K64.

The protein belongs to the OMP decarboxylase family. Type 1 subfamily. Homodimer.

It catalyses the reaction orotidine 5'-phosphate + H(+) = UMP + CO2. The protein operates within pyrimidine metabolism; UMP biosynthesis via de novo pathway; UMP from orotate: step 2/2. Functionally, catalyzes the decarboxylation of orotidine 5'-monophosphate (OMP) to uridine 5'-monophosphate (UMP). This chain is Orotidine 5'-phosphate decarboxylase, found in Ruegeria pomeroyi (strain ATCC 700808 / DSM 15171 / DSS-3) (Silicibacter pomeroyi).